The primary structure comprises 293 residues: MYNQRTISVCIIGRPNSGKSTLLNRIIGEKLSIVTPKVQTTRSIITGIITLKDTQVILYDTPGIFEPKGSLEKAMVRCAWSSLHSADLVMLIIDSLKPFDDVTHDILDKLRSLNIVPIFLLNKIDIESKYLDDIKAFLIGNHPDSLFFPISALSGKNINGLLEYITGKAQIAPWLYAEDDITDLPMRFIAAEITREQLFFNLQQELPYKLTVQTEKWEDLKDKSVKINQVIIVSRASYKTIILGKNGSKIREIGSKSRMQMERFFGFPVHLFLFVKVHELWENHPDFYQYMKI.

The region spanning 5–174 (RTISVCIIGR…ITGKAQIAPW (170 aa)) is the Era-type G domain. The G1 stretch occupies residues 13-20 (GRPNSGKS). 13-20 (GRPNSGKS) is a binding site for GTP. Positions 39 to 43 (QTTRS) are G2. A G3 region spans residues 60-63 (DTPG). Residues 60 to 64 (DTPGI) and 122 to 125 (NKID) contribute to the GTP site. Residues 122 to 125 (NKID) are G4. The tract at residues 150 to 152 (ISA) is G5. In terms of domain architecture, KH type-2 spans 202–279 (LQQELPYKLT…HLFLFVKVHE (78 aa)).

The protein belongs to the TRAFAC class TrmE-Era-EngA-EngB-Septin-like GTPase superfamily. Era GTPase family. In terms of assembly, monomer.

It is found in the cytoplasm. Its subcellular location is the cell inner membrane. In terms of biological role, an essential GTPase that binds both GDP and GTP, with rapid nucleotide exchange. Plays a role in 16S rRNA processing and 30S ribosomal subunit biogenesis and possibly also in cell cycle regulation and energy metabolism. This Rickettsia akari (strain Hartford) protein is GTPase Era.